A 137-amino-acid polypeptide reads, in one-letter code: MNVPRGWLAALGSVLLVSAAQLGMRWGMSRLPLPEAWAGQTPEHAALLAVALAVAAYAASLLCWLAALRHLPLGRAYSLLSASYALVYLLAASLPAFEETFTTGKTLGVGLVVLGVLTVNARRTAAAPAHHPSRKAL.

At 1–5 (MNVPR) the chain is on the cytoplasmic side. The helical transmembrane segment at 6–26 (GWLAALGSVLLVSAAQLGMRW) threads the bilayer. The Periplasmic segment spans residues 27-44 (GMSRLPLPEAWAGQTPEH). A helical membrane pass occupies residues 45–65 (AALLAVALAVAAYAASLLCWL). Over 66–76 (AALRHLPLGRA) the chain is Cytoplasmic. Residues 77–97 (YSLLSASYALVYLLAASLPAF) traverse the membrane as a helical segment. Over 98–100 (EET) the chain is Periplasmic. Residues 101–121 (FTTGKTLGVGLVVLGVLTVNA) form a helical membrane-spanning segment. Topologically, residues 122 to 137 (RRTAAAPAHHPSRKAL) are cytoplasmic.

This sequence belongs to the ArnF family. As to quaternary structure, heterodimer of ArnE and ArnF.

It localises to the cell inner membrane. It participates in bacterial outer membrane biogenesis; lipopolysaccharide biosynthesis. Translocates 4-amino-4-deoxy-L-arabinose-phosphoundecaprenol (alpha-L-Ara4N-phosphoundecaprenol) from the cytoplasmic to the periplasmic side of the inner membrane. The chain is Probable 4-amino-4-deoxy-L-arabinose-phosphoundecaprenol flippase subunit ArnF from Pseudomonas paraeruginosa (strain DSM 24068 / PA7) (Pseudomonas aeruginosa (strain PA7)).